We begin with the raw amino-acid sequence, 119 residues long: Large ribosomal subunit protein bL20 (119 aa).

This sequence belongs to the bacterial ribosomal protein bL20 family.

Functionally, binds directly to 23S ribosomal RNA and is necessary for the in vitro assembly process of the 50S ribosomal subunit. It is not involved in the protein synthesizing functions of that subunit. This is Large ribosomal subunit protein bL20 from Colwellia psychrerythraea (strain 34H / ATCC BAA-681) (Vibrio psychroerythus).